A 533-amino-acid chain; its full sequence is Peptide chain release factor 3 (533 aa).

The tr-type G domain occupies 9-284; the sequence is ARRRTFAIIS…ALCELSPPPL (276 aa). Residues 18-25, 95-99, and 149-152 contribute to the GTP site; these read SHPDAGKT, DTPGH, and NKLD.

The protein belongs to the TRAFAC class translation factor GTPase superfamily. Classic translation factor GTPase family. PrfC subfamily.

Its subcellular location is the cytoplasm. Functionally, increases the formation of ribosomal termination complexes and stimulates activities of RF-1 and RF-2. It binds guanine nucleotides and has strong preference for UGA stop codons. It may interact directly with the ribosome. The stimulation of RF-1 and RF-2 is significantly reduced by GTP and GDP, but not by GMP. The chain is Peptide chain release factor 3 from Cupriavidus taiwanensis (strain DSM 17343 / BCRC 17206 / CCUG 44338 / CIP 107171 / LMG 19424 / R1) (Ralstonia taiwanensis (strain LMG 19424)).